Consider the following 114-residue polypeptide: Hydrogenase maturation factor HypA (114 aa).

Position 2 (histidine 2) interacts with Ni(2+). The Zn(2+) site is built by cysteine 73, cysteine 76, cysteine 89, and cysteine 92.

Belongs to the HypA/HybF family.

Functionally, involved in the maturation of [NiFe] hydrogenases. Required for nickel insertion into the metal center of the hydrogenase. The sequence is that of Hydrogenase maturation factor HypA from Syntrophus aciditrophicus (strain SB).